The primary structure comprises 178 residues: Tetratricopeptide repeat protein 9C (178 aa).

TPR repeat units lie at residues 15–48, 79–114, and 115–148; these read ASSF…LRSL, ADCY…QPEN, and VKAL…APKD.

The protein belongs to the TTC9 family.

This chain is Tetratricopeptide repeat protein 9C (ttc9c), found in Xenopus tropicalis (Western clawed frog).